A 128-amino-acid polypeptide reads, in one-letter code: Organic solute transporter subunit beta (128 aa).

Over 1-30 (MDHSAEKAAANAEVPQELLEEMLWYFRAED) the chain is Extracellular. Residues 31 to 53 (AAPWNYSILVLAVLVVMTSMFLL) form a helical membrane-spanning segment. Residues 54 to 128 (RRSILANRNR…FLPDPQETES (75 aa)) lie on the Cytoplasmic side of the membrane. 2 disordered regions span residues 61–80 (RNRKKQPQDKETPEDLHLDD) and 101–128 (PDLAPGEPELKEKDSSLVFLPDPQETES). 2 stretches are compositionally biased toward basic and acidic residues: residues 66–80 (QPQDKETPEDLHLDD) and 101–115 (PDLAPGEPELKEKDS). Ser116 is subject to Phosphoserine.

Belongs to the OST-beta family. As to quaternary structure, interacts with SLC51A. The Ost-alpha/Ost-beta complex is a heterodimer composed of alpha (SLC51A) and beta (SLC51B) subunit; induces the transport of SLC51A from the endoplasmic reticulum to the plasma membrane. Present at high level in ileum. In ileum, it is restricted to the apical domain on the mature villus enterocytes with little detectable expression in the goblet cells or crypt enterocytes (at protein level). Expressed in kidney but not in heart, brain, liver, spleen, embryo, lung, thymus, ovary nor testis.

It localises to the cell membrane. It catalyses the reaction taurocholate(out) = taurocholate(in). It carries out the reaction tauroursodeoxycholate(out) = tauroursodeoxycholate(in). The catalysed reaction is glycoursodeoxycholate(out) = glycoursodeoxycholate(in). The enzyme catalyses glycocholate(out) = glycocholate(in). It catalyses the reaction taurochenodeoxycholate(out) = taurochenodeoxycholate(in). It carries out the reaction glycochenodeoxycholate(out) = glycochenodeoxycholate(in). The catalysed reaction is taurodeoxycholate(out) = taurodeoxycholate(in). The enzyme catalyses glycodeoxycholate(out) = glycodeoxycholate(in). It catalyses the reaction prostaglandin E2(out) = prostaglandin E2(in). It carries out the reaction estrone 3-sulfate(out) = estrone 3-sulfate(in). The catalysed reaction is dehydroepiandrosterone 3-sulfate(out) = dehydroepiandrosterone 3-sulfate(in). Its function is as follows. Essential component of the Ost-alpha/Ost-beta complex, a heterodimer that acts as the intestinal basolateral transporter responsible for bile acid export from enterocytes into portal blood. The Ost-alpha/Ost-beta complex efficiently transports the major species of bile acids (taurocholate). Taurine conjugates are transported more efficiently across the basolateral membrane than glycine-conjugated bile acids. Can also transport steroids such as estrone 3-sulfate and dehydroepiandrosterone 3-sulfate, therefore playing a role in the enterohepatic circulation of sterols. Able to transport eicosanoids such as prostaglandin E2. Modulates SLC51A glycosylation, membrane trafficking and stability activities. This is Organic solute transporter subunit beta (Slc51b) from Mus musculus (Mouse).